The primary structure comprises 391 residues: Ferrochelatase (391 aa).

2 residues coordinate Fe cation: H196 and E281.

It belongs to the ferrochelatase family.

It is found in the cytoplasm. The enzyme catalyses heme b + 2 H(+) = protoporphyrin IX + Fe(2+). The protein operates within porphyrin-containing compound metabolism; protoheme biosynthesis; protoheme from protoporphyrin-IX: step 1/1. Functionally, catalyzes the ferrous insertion into protoporphyrin IX. This Parasynechococcus marenigrum (strain WH8102) protein is Ferrochelatase.